Here is a 551-residue protein sequence, read N- to C-terminus: MKTDIEIAREAKLEKITKIAEKIDISEEYVEPYGKYIAKVDLKIWEKVKNNKDGKLILVTAMTPTPAGEGKTTTSIGLSMALNRLGKKSIVTLREPSLGPVFGIKGGAAGGGYSQVLPMENINLHFTGDIHAVSAAHNLISAVIDAHIKFGNELGIDPTRIYWKRTIDMNDRALRNIVVGLGGSANGQPREDGFIITAASEIMAILCLAKDLKDLKERLSNIVVAQSYDKKLIKVKDLKIEGALAVLLKDAIKPNLVQTIENTPAFVHGGPFANIAHGTNSIIATKLALKLSDYVVTEAGFAADLGAEKFLDFVSPTAGYDVNAVVVVATIKALKYHGGVKKDELDNENVEAMLKGMENLRVHVENLKKYNVPVIVALNVFGSDTQRELDEFSKNCEIPHALVYAFEKGGEGAVDLANLVLENIKESQYKPLITSEMSLEEKIETLAKEIYRAGNVIYTDKAKSKLKFLRKHGYDTLPVIVAKTQSSISDDPKKINAPSGYTFTIRDFELSAGAGFIVALAGDIMRMPGLSKIPNAVNIDIDEEGNIIGLS.

Residue 65 to 72 participates in ATP binding; that stretch reads TPAGEGKT.

It belongs to the formate--tetrahydrofolate ligase family.

It carries out the reaction (6S)-5,6,7,8-tetrahydrofolate + formate + ATP = (6R)-10-formyltetrahydrofolate + ADP + phosphate. The protein operates within one-carbon metabolism; tetrahydrofolate interconversion. This is Formate--tetrahydrofolate ligase from Thermosipho africanus (strain TCF52B).